A 147-amino-acid chain; its full sequence is Globin, major polymeric component P1 (147 aa).

A Globin domain is found at 2–146 (HLTADQVAAL…ISDACIAGLQ (145 aa)). His96 contacts heme b.

This sequence belongs to the globin family. In terms of assembly, polymer.

In Glycera dibranchiata (Bloodworm), this protein is Globin, major polymeric component P1.